Here is a 164-residue protein sequence, read N- to C-terminus: MASHSGPSTSVLFLFCCLGGWLASHTLPVRLLRPSDDVQKIVEELQSLSKMLLKDVEEEKGVLVSQNYTLPCLSPDAQPPNNIHSPAIRAYLKTIRQLDNKSVIDEIIEHLDKLIFQDAPETNISVPTDTHECKRFILTISQQFSECMDLALKSLTSGAQQATT.

The first 23 residues, 1 to 23 (MASHSGPSTSVLFLFCCLGGWLA), serve as a signal peptide directing secretion. Residues asparagine 67 and asparagine 100 are each glycosylated (N-linked (GlcNAc...) asparagine).

In terms of tissue distribution, detected at low levels in testis, bone marrow, skeletal muscle, kidney, colon, thymus, small intestine and trachea.

It localises to the secreted. In terms of biological role, activates STAT3 and possibly STAT1 and STAT5 through the IL31 heterodimeric receptor composed of IL31RA and OSMR. May function in skin immunity. Enhances myeloid progenitor cell survival in vitro. Induces RETNLA and serum amyloid A protein expression in macrophages. The sequence is that of Interleukin-31 (IL31) from Homo sapiens (Human).